Consider the following 127-residue polypeptide: Large ribosomal subunit protein eL32 (127 aa).

A compositionally biased stretch (basic and acidic residues) spans 37–48 (KWRKPKGTDSKM). The interval 37–65 (KWRKPKGTDSKMRVKLKGKARSPSIGWSS) is disordered.

It belongs to the eukaryotic ribosomal protein eL32 family.

The chain is Large ribosomal subunit protein eL32 from Thermococcus sibiricus (strain DSM 12597 / MM 739).